Here is a 171-residue protein sequence, read N- to C-terminus: Transcriptional repressor NrdR (171 aa).

Residues 1–21 form a disordered region; the sequence is MQCPHCQHTDSRVLESRSSEN. A zinc finger spans residues 3–34; sequence CPHCQHTDSRVLESRSSENGQSIRRRRECLQC. Positions 7-18 are enriched in basic and acidic residues; it reads QHTDSRVLESRS. The region spanning 49-139 is the ATP-cone domain; it reads ITVIKKDGKR…VYGNFQGIRD (91 aa).

This sequence belongs to the NrdR family. Zn(2+) serves as cofactor.

In terms of biological role, negatively regulates transcription of bacterial ribonucleotide reductase nrd genes and operons by binding to NrdR-boxes. The protein is Transcriptional repressor NrdR of Microcystis aeruginosa (strain NIES-843 / IAM M-2473).